The chain runs to 331 residues: Phosphate acyltransferase (331 aa).

The protein belongs to the PlsX family. In terms of assembly, homodimer. Probably interacts with PlsY.

The protein localises to the cytoplasm. It catalyses the reaction a fatty acyl-[ACP] + phosphate = an acyl phosphate + holo-[ACP]. The protein operates within lipid metabolism; phospholipid metabolism. In terms of biological role, catalyzes the reversible formation of acyl-phosphate (acyl-PO(4)) from acyl-[acyl-carrier-protein] (acyl-ACP). This enzyme utilizes acyl-ACP as fatty acyl donor, but not acyl-CoA. The sequence is that of Phosphate acyltransferase from Ureaplasma parvum serovar 3 (strain ATCC 27815 / 27 / NCTC 11736).